Reading from the N-terminus, the 97-residue chain is MTDLRHYDVIVSPSITEKSTLVSEQNQVVFNVAKTASKPEIKAAVEALFGVKVTAVNTLIRKGKTRRFRGFAGKLKDVKKAVVTLAEGQSIDVSTGL.

It belongs to the universal ribosomal protein uL23 family. As to quaternary structure, part of the 50S ribosomal subunit. Contacts protein L29, and trigger factor when it is bound to the ribosome.

In terms of biological role, one of the early assembly proteins it binds 23S rRNA. One of the proteins that surrounds the polypeptide exit tunnel on the outside of the ribosome. Forms the main docking site for trigger factor binding to the ribosome. The protein is Large ribosomal subunit protein uL23 of Agrobacterium fabrum (strain C58 / ATCC 33970) (Agrobacterium tumefaciens (strain C58)).